The sequence spans 369 residues: Glutamate 5-kinase (369 aa).

K9 serves as a coordination point for ATP. Residues S49, D136, and N148 each coordinate substrate. ATP contacts are provided by residues 168–169 (TD) and 210–216 (TGGMLTK). The 81-residue stretch at 275 to 355 (RGGVYVDEGA…KGVFIHRDDW (81 aa)) folds into the PUA domain.

It belongs to the glutamate 5-kinase family.

It localises to the cytoplasm. It catalyses the reaction L-glutamate + ATP = L-glutamyl 5-phosphate + ADP. Its pathway is amino-acid biosynthesis; L-proline biosynthesis; L-glutamate 5-semialdehyde from L-glutamate: step 1/2. Catalyzes the transfer of a phosphate group to glutamate to form L-glutamate 5-phosphate. This chain is Glutamate 5-kinase, found in Neisseria meningitidis serogroup A / serotype 4A (strain DSM 15465 / Z2491).